A 428-amino-acid polypeptide reads, in one-letter code: Adenylosuccinate synthetase (428 aa).

Residues 12–18 (GDEGKGK) and 40–42 (GHT) each bind GTP. D13 serves as the catalytic Proton acceptor. 2 residues coordinate Mg(2+): D13 and G40. Residues 13–16 (DEGK), 38–41 (NAGH), T128, R142, Q223, T238, and R302 contribute to the IMP site. The active-site Proton donor is H41. 298-304 (TTTGRPR) is a substrate binding site. GTP contacts are provided by residues R304, 330–332 (SID), and 412–414 (SVG).

This sequence belongs to the adenylosuccinate synthetase family. In terms of assembly, homodimer. Mg(2+) is required as a cofactor.

Its subcellular location is the cytoplasm. The catalysed reaction is IMP + L-aspartate + GTP = N(6)-(1,2-dicarboxyethyl)-AMP + GDP + phosphate + 2 H(+). It functions in the pathway purine metabolism; AMP biosynthesis via de novo pathway; AMP from IMP: step 1/2. Functionally, plays an important role in the de novo pathway of purine nucleotide biosynthesis. Catalyzes the first committed step in the biosynthesis of AMP from IMP. The polypeptide is Adenylosuccinate synthetase (Geobacillus kaustophilus (strain HTA426)).